Consider the following 190-residue polypeptide: Protein GrpE (190 aa).

A compositionally biased stretch (polar residues) spans 1–18; the sequence is MTETPNTSSEEIQTSEPS. The tract at residues 1 to 21 is disordered; the sequence is MTETPNTSSEEIQTSEPSPDN.

Belongs to the GrpE family. As to quaternary structure, homodimer.

It is found in the cytoplasm. Functionally, participates actively in the response to hyperosmotic and heat shock by preventing the aggregation of stress-denatured proteins, in association with DnaK and GrpE. It is the nucleotide exchange factor for DnaK and may function as a thermosensor. Unfolded proteins bind initially to DnaJ; upon interaction with the DnaJ-bound protein, DnaK hydrolyzes its bound ATP, resulting in the formation of a stable complex. GrpE releases ADP from DnaK; ATP binding to DnaK triggers the release of the substrate protein, thus completing the reaction cycle. Several rounds of ATP-dependent interactions between DnaJ, DnaK and GrpE are required for fully efficient folding. This Chlamydia trachomatis serovar L2 (strain ATCC VR-902B / DSM 19102 / 434/Bu) protein is Protein GrpE.